A 960-amino-acid polypeptide reads, in one-letter code: Cyclin-dependent kinase-like 5 (960 aa).

The Protein kinase domain maps to 13-297 (FEILGVVGEG…TEQCLNHPTF (285 aa)). ATP contacts are provided by residues 19–27 (VGEGAYGVV) and lysine 42. Residue aspartate 135 is the Proton acceptor of the active site. 4 disordered regions span residues 300-349 (QRLL…IQNL), 382-566 (KTYQ…RHSK), 646-834 (SPQP…TQSQ), and 848-960 (ASNH…ETAL). 2 stretches are compositionally biased toward polar residues: residues 319 to 336 (ESST…TALQ) and 382 to 402 (KTYQ…NNNI). Position 407 is a phosphoserine (serine 407). The span at 407-417 (SPKEAKSKTEF) shows a compositional bias: basic and acidic residues. Composition is skewed to polar residues over residues 434–462 (LKSN…QPNE), 473–482 (IPQSSRSPSY), and 510–548 (EPST…SGRN). Position 479 is a phosphoserine (serine 479). Basic and acidic residues-rich tracts occupy residues 549–559 (NRNEGTLDSRR) and 679–704 (QKSE…RHLY). Serine 720 is modified (phosphoserine). Residues 728–748 (HENNVSTRVSSLPSESSSGTN) show a composition bias toward polar residues. Serine 761 is subject to Phosphoserine. The span at 769–778 (EQLKEKEKQG) shows a compositional bias: basic and acidic residues. The segment covering 791–816 (QTVPNSDSPDLLTLQKSIHSASTPSS) has biased composition (polar residues). Positions 817-827 (RPKEWRPEKIS) are enriched in basic and acidic residues. Composition is skewed to polar residues over residues 862–872 (LTAQQTKNSFS), 880–890 (SQASGGSSNIR), and 914–928 (SSVT…SYSE).

It belongs to the protein kinase superfamily. CMGC Ser/Thr protein kinase family. CDC2/CDKX subfamily. As to quaternary structure, interacts with MECP2. In terms of processing, autophosphorylated. As to expression, expressed in brain, lung, kidney, prostate, ovary, placenta, pancreas and testis. In terms of tissue distribution, predominant transcript in brain.

It localises to the nucleus. The protein localises to the cytoplasm. The protein resides in the cytoskeleton. It is found in the cilium basal body. Its subcellular location is the microtubule organizing center. It localises to the centrosome. The catalysed reaction is L-seryl-[protein] + ATP = O-phospho-L-seryl-[protein] + ADP + H(+). It catalyses the reaction L-threonyl-[protein] + ATP = O-phospho-L-threonyl-[protein] + ADP + H(+). Functionally, mediates phosphorylation of MECP2. May regulate ciliogenesis. The polypeptide is Cyclin-dependent kinase-like 5 (Homo sapiens (Human)).